Reading from the N-terminus, the 151-residue chain is Sperm surface protein Sp17 (151 aa).

Disordered stretches follow at residues 56–115 (DPAE…EKEE) and 127–151 (GHIAREEAKKMKTNSLQNEEKEENK). The span at 62 to 98 (SKVEDRFYNNHAFEEQEPPEKSDPKQEESQISGKEEE) shows a compositional bias: basic and acidic residues. The IQ domain occupies 114–143 (EEVAAVKIQAAFRGHIAREEAKKMKTNSLQ).

In terms of assembly, homodimer. May interact with ROPN1. Testis and sperm specific.

It is found in the membrane. Sperm surface zona pellucida binding protein. Helps to bind spermatozoa to the zona pellucida with high affinity. Might function in binding zona pellucida and carbohydrates. The sequence is that of Sperm surface protein Sp17 (SPA17) from Homo sapiens (Human).